A 355-amino-acid polypeptide reads, in one-letter code: Phosphoribosylformylglycinamidine cyclo-ligase (355 aa).

Belongs to the AIR synthase family.

It is found in the cytoplasm. The catalysed reaction is 2-formamido-N(1)-(5-O-phospho-beta-D-ribosyl)acetamidine + ATP = 5-amino-1-(5-phospho-beta-D-ribosyl)imidazole + ADP + phosphate + H(+). It participates in purine metabolism; IMP biosynthesis via de novo pathway; 5-amino-1-(5-phospho-D-ribosyl)imidazole from N(2)-formyl-N(1)-(5-phospho-D-ribosyl)glycinamide: step 2/2. This Methylobacterium nodulans (strain LMG 21967 / CNCM I-2342 / ORS 2060) protein is Phosphoribosylformylglycinamidine cyclo-ligase.